The sequence spans 349 residues: Tribbles homolog 3 (349 aa).

The tract at residues 1–122 (MRATSLAASA…QHVARPTEVL (122 aa)) is interaction with DDIT3/CHOP. The segment at 35 to 57 (VRDEPEPGPTPSLPPASDLSPAV) is disordered. Residues 63 to 310 (LGPYILLERE…ALGILLHPWL (248 aa)) form the Protein kinase domain. The disordered stretch occupies residues 317–349 (VSPPRSDRREMDQVVPDGPQLEEAEEGEVGLYG). Residues 336–349 (QLEEAEEGEVGLYG) are compositionally biased toward acidic residues.

This sequence belongs to the protein kinase superfamily. CAMK Ser/Thr protein kinase family. Tribbles subfamily. As to quaternary structure, interacts with AKT1, AKT2, MAP2K1 and MAP2K7. Interacts with ATF4. Interacts with DDIT3/CHOP and inhibits its interaction with EP300/P300. Interacts with APOBEC3C. Interacts (via N-terminus) with APOBEC3A. Interacts with RELA. In terms of tissue distribution, detected only in the lung. Not detected in the heart, brain, spleen, liver, skeletal muscle, kidney and testis.

Its subcellular location is the nucleus. Functionally, inactive protein kinase which acts as a regulator of the integrated stress response (ISR), a process for adaptation to various stress. Inhibits the transcriptional activity of DDIT3/CHOP and is involved in DDIT3/CHOP-dependent cell death during ER stress. May play a role in programmed neuronal cell death but does not appear to affect non-neuronal cells. Acts as a negative feedback regulator of the ATF4-dependent transcription during the ISR: while TRIB3 expression is promoted by ATF4, TRIB3 protein interacts with ATF4 and inhibits ATF4 transcription activity. Disrupts insulin signaling by binding directly to Akt kinases and blocking their activation. May bind directly to and mask the 'Thr-308' phosphorylation site in AKT1. Interacts with the NF-kappa-B transactivator p65 RELA and inhibits its phosphorylation and thus its transcriptional activation activity. Interacts with MAPK kinases and regulates activation of MAP kinases. Can inhibit APOBEC3A editing of nuclear DNA. The chain is Tribbles homolog 3 (Trib3) from Rattus norvegicus (Rat).